A 987-amino-acid chain; its full sequence is 110 kDa U5 small nuclear ribonucleoprotein component CLO (987 aa).

Residues 1–54 (MESSLYDEFGNYVGPEIESDRDSDDEVEDEDLQDKHLEENGSDGEQGPGGSNGW) are disordered. Positions 17-32 (IESDRDSDDEVEDEDL) are enriched in acidic residues. Positions 136–422 (ALVRNVALVG…LGVTLSNSAY (287 aa)) constitute a tr-type G domain. Residues 145 to 152 (GHLQHGKT) form a G1 region. 145–152 (GHLQHGKT) lines the GTP pocket. Positions 189–193 (NISIK) are G2. Residues 215 to 218 (DTPG) form a G3 region. GTP contacts are provided by residues 215 to 219 (DTPGH) and 269 to 272 (NKVD). The segment at 269-272 (NKVD) is G4. The segment at 395–397 (YSQ) is G5.

Belongs to the TRAFAC class translation factor GTPase superfamily. Classic translation factor GTPase family. As to quaternary structure, interacts with BRR2A and PRP8A. In terms of tissue distribution, expressed in flower buds, open flowers and siliques. Expressed at low levels in rosettes leaves, cauline leaves and stems.

The protein resides in the nucleus speckle. Functionally, splicing factor involved in pre-mRNA splicing and component of the spliceosome. Essential for reproduction. In female gametophyte, is necessary for the egg cell and central cell fate determination and hence reproductive success. Involved in a mechanism that prevents accessory cells from adopting gametic cell fate. Is necessary to restrict LIS expression to interfere with egg-cell specification. Probable component of U5 small nuclear ribonucleoprotein (snRNP) that is required for pre-mRNA splicing. Plays an essential role in female gametogenesis and embryo development. Required for the control of polarized cell growth and cell proliferation during floral organ morphogenesis. In Arabidopsis thaliana (Mouse-ear cress), this protein is 110 kDa U5 small nuclear ribonucleoprotein component CLO.